Consider the following 444-residue polypeptide: Structure-specific endonuclease subunit SLX1 (444 aa).

Residues 23-105 (AFYCCYLLRS…QNTKVSRHAD (83 aa)) enclose the GIY-YIG domain. The segment at 240–295 (CGVCKQRLILQHDIIAVCSHSSCHCAAHLSCLSSHFLKDKDSDSELIPREGTCPAC) adopts an SLX1-type zinc-finger fold. 2 disordered regions span residues 323-355 (RRRR…DALQ) and 386-444 (AHRP…EVIE).

This sequence belongs to the SLX1 family. Forms a heterodimer with SLX4. Requires a divalent metal cation as cofactor.

The protein resides in the nucleus. Its function is as follows. Catalytic subunit of the SLX1-SLX4 structure-specific endonuclease that resolves DNA secondary structures generated during DNA repair and recombination. Has endonuclease activity towards branched DNA substrates, introducing single-strand cuts in duplex DNA close to junctions with ss-DNA. This chain is Structure-specific endonuclease subunit SLX1, found in Paracoccidioides brasiliensis (strain Pb18).